Reading from the N-terminus, the 485-residue chain is uncharacterized protein (485 aa).

A disordered region spans residues 151-201; the sequence is IKAPTNNSQSGDGNGGTNNDNLLGTFDIREKSNGKKGESNGKQGNGQDKKT. A compositionally biased stretch (low complexity) spans 155 to 174; the sequence is TNNSQSGDGNGGTNNDNLLG. The span at 177–189 shows a compositional bias: basic and acidic residues; it reads DIREKSNGKKGES.

The protein belongs to the MG185/MG260 family.

This is an uncharacterized protein from Mycoplasma pneumoniae (strain ATCC 29342 / M129 / Subtype 1) (Mycoplasmoides pneumoniae).